The sequence spans 114 residues: Iron-sulfur cluster insertion protein ErpA (114 aa).

Positions 42, 106, and 108 each coordinate iron-sulfur cluster.

Belongs to the HesB/IscA family. As to quaternary structure, homodimer. Iron-sulfur cluster serves as cofactor.

In terms of biological role, required for insertion of 4Fe-4S clusters for at least IspG. The chain is Iron-sulfur cluster insertion protein ErpA from Edwardsiella ictaluri (strain 93-146).